The primary structure comprises 253 residues: MASNFWTSTHYKELKDPEEVNVVHPLDAQRGISVEDFRLIKLHMSNYISKLAQHIKIRQRVVATAVTYMRRVYTRKSLTEYEPRLVAPTCLYLACKAEESVVHAKLLVFYMKKLYADEKFRYEIKDILEMEMKVLEALNFYLVVFHPYRSLPEFLQDSGINDTSMTHLTWGLVNDTYRMDLILIHPPFLITLACIYIASVHKEKDIKTWFEELSVDMNIVKNIAMEILDFYENHRLFTEERVHAAFNKLATNP.

The protein belongs to the cyclin family. Cyclin C subfamily.

This chain is Cyclin-C1-2 (CYCC1-2), found in Arabidopsis thaliana (Mouse-ear cress).